The primary structure comprises 31 residues: Photosystem II reaction center protein T (31 aa).

The chain crosses the membrane as a helical span at residues 3 to 23; that stretch reads ALVYTFLLVGTLGIIFFSIFF.

This sequence belongs to the PsbT family. PSII is composed of 1 copy each of membrane proteins PsbA, PsbB, PsbC, PsbD, PsbE, PsbF, PsbH, PsbI, PsbJ, PsbK, PsbL, PsbM, PsbT, PsbY, PsbZ, Psb30/Ycf12, at least 3 peripheral proteins of the oxygen-evolving complex and a large number of cofactors. It forms dimeric complexes.

The protein resides in the plastid. It localises to the chloroplast thylakoid membrane. Found at the monomer-monomer interface of the photosystem II (PS II) dimer, plays a role in assembly and dimerization of PSII. PSII is a light-driven water plastoquinone oxidoreductase, using light energy to abstract electrons from H(2)O, generating a proton gradient subsequently used for ATP formation. In Chlamydomonas reinhardtii (Chlamydomonas smithii), this protein is Photosystem II reaction center protein T.